The primary structure comprises 146 residues: Hemagglutinin component HA-17 type D (146 aa).

As to quaternary structure, botulinum toxins are produced as large progenitor toxins of 12S (M toxin, about 280 kDa) and 16S (L toxin, about 650 kDa). M toxin consists of a non-toxic, non-hemagglutinin component (NTNHA) and the neurotoxin (BoNT/D). L toxin consists of the M toxin and the 3 hemagglutinin (HA) subcomponents of 70, 33, and 17 kDa. The stoichiometry of the whole complex has been modeled as one BoNT/D, one NTNHA, three HA-70, six HA-33 and three HA-17. HA-33 and HA-17 crystallize as a heterotrimer with two HA-33 and one HA-17.

It is found in the secreted. Its function is as follows. The hemagglutinin (HA) component of the progenitor toxin protects the structural integrity of the neurotoxin; may increase internalization of the neurotoxin into the bloodstream of the host. Involved in binding to the small intestine through interactions with glycolipids and glycoproteins containing sialic acid moieties. The hemagglutinin complex composed of HA-70, HA-33 and HA-17 agglutinates erythrocytes, whereas the individual compenents do not. Erythrocyte agglutination also occurs with the entire toxin complex. This is Hemagglutinin component HA-17 type D from Clostridium botulinum D phage (Clostridium botulinum D bacteriophage).